Here is a 234-residue protein sequence, read N- to C-terminus: MSNLRTLVFYATPEHPCSYLDDRLATTMFVDPKADINLDLYTRLSQLGFRRSGNHYYKPRCNGCNACIAVRIPTEEFNRTRSQERTWKRNSDLTVRLRSAQFEQEHFALYQRYISARHQDGDMYPPTLDQYESFLLEARSETLFIEFRKDSKLLAIAVTDRTTDGLSAIYTFFDPNEDKRALGVYAILWQLQFAREQRLPYLYLGYWIRGCRKMSYKTNYRPIQVLVRDSWITI.

This sequence belongs to the R-transferase family. Bpt subfamily.

It is found in the cytoplasm. The enzyme catalyses N-terminal L-glutamyl-[protein] + L-leucyl-tRNA(Leu) = N-terminal L-leucyl-L-glutamyl-[protein] + tRNA(Leu) + H(+). The catalysed reaction is N-terminal L-aspartyl-[protein] + L-leucyl-tRNA(Leu) = N-terminal L-leucyl-L-aspartyl-[protein] + tRNA(Leu) + H(+). Its function is as follows. Functions in the N-end rule pathway of protein degradation where it conjugates Leu from its aminoacyl-tRNA to the N-termini of proteins containing an N-terminal aspartate or glutamate. This Hahella chejuensis (strain KCTC 2396) protein is Aspartate/glutamate leucyltransferase.